The following is a 56-amino-acid chain: U-limacoditoxin(3)-Dv21 (56 aa).

Positions 1-19 (MKKVIMLLLIFALFAYALS) are cleaved as a signal peptide. 3 cysteine pairs are disulfide-bonded: cysteine 26-cysteine 41, cysteine 33-cysteine 46, and cysteine 40-cysteine 53.

It belongs to the limacoditoxin-22 family. As to expression, expressed by the venom secretory cell of the spine. The spine is a cuticular structure containing a single large nucleated venom-secreting cell at its base. It is an independent unit capable of producing, storing and injecting venom. On the back of D.vulnerans caterpillars, spines are grouped together by 50 to 100 to form scoli, of which there are eight in D.vulnerans.

It is found in the secreted. Probable toxin. Shows a moderate antiparasitic activity against the major pathogenic nematode of ruminants (H.contortus, IC(50)=22.1 uM). Does not show insecticidal activities. Does not induce increase in intracellular calcium in mouse DRG neurons, suggesting that it does not induce pain. The polypeptide is U-limacoditoxin(3)-Dv21 (Doratifera vulnerans (Mottled cup moth)).